The sequence spans 221 residues: Endonuclease V (221 aa).

Mg(2+)-binding residues include Asp44 and Asp112.

The protein belongs to the endonuclease V family. Mg(2+) is required as a cofactor.

It is found in the cytoplasm. It catalyses the reaction Endonucleolytic cleavage at apurinic or apyrimidinic sites to products with a 5'-phosphate.. In terms of biological role, DNA repair enzyme involved in the repair of deaminated bases. Selectively cleaves double-stranded DNA at the second phosphodiester bond 3' to a deoxyinosine leaving behind the intact lesion on the nicked DNA. This Nostoc sp. (strain PCC 7120 / SAG 25.82 / UTEX 2576) protein is Endonuclease V.